The primary structure comprises 434 residues: CCA tRNA nucleotidyltransferase 1, mitochondrial (434 aa).

The transit peptide at 1 to 41 (MLRCLYHWHRPVLNRRWSRLCLPKQYLFTMKLQSPEFQSLF) directs the protein to the mitochondrion. ATP contacts are provided by Gly-64 and Arg-67. 2 residues coordinate CTP: Gly-64 and Arg-67. Residues Asp-77 and Asp-79 each contribute to the Mg(2+) site. ATP-binding residues include Arg-151, Asp-194, Arg-197, Arg-200, and Arg-203. CTP-binding residues include Arg-151, Asp-194, Arg-197, Arg-200, and Arg-203. Position 400 is a phosphoserine (Ser-400). Position 402 is an N6-acetyllysine (Lys-402).

The protein belongs to the tRNA nucleotidyltransferase/poly(A) polymerase family. In terms of assembly, monomer, and homodimer; disulfide-linked. Mg(2+) is required as a cofactor.

It is found in the mitochondrion. Its subcellular location is the cytoplasm. The protein resides in the nucleus. It catalyses the reaction a tRNA precursor + 2 CTP + ATP = a tRNA with a 3' CCA end + 3 diphosphate. The enzyme catalyses a tRNA with a 3' CCA end + 2 CTP + ATP = a tRNA with a 3' CCACCA end + 3 diphosphate. In terms of biological role, nucleotidyltransferase that catalyzes the addition and repair of the essential 3'-terminal CCA sequence in tRNAs, which is necessary for the attachment of amino acids to the 3' terminus of tRNA molecules, using CTP and ATP as substrates. tRNA 3'-terminal CCA addition is required both for tRNA processing and repair. Promotes tRNA repair and recycling downstream of the ribosome-associated quality control (RQC) pathway by mediating addition of the tRNA 3'-terminal CCA following cleavage by ANKZF1 and repair by ELAC1. Also involved in tRNA surveillance by mediating tandem CCA addition to generate a CCACCA at the 3' terminus of unstable tRNAs and tRNA-like transcripts. While stable tRNAs receive only 3'-terminal CCA, unstable tRNAs beginning with GG are marked with CCACCA and rapidly degraded. The structural flexibility of RNA controls the choice between CCA versus CCACCA addition: following the first CCA addition cycle, nucleotide-binding to the active site triggers a clockwise screw motion, producing torque on the RNA. This ejects stable RNAs, whereas unstable RNAs are refolded while bound to the enzyme and subjected to a second CCA catalytic cycle. Adds 2 C residues (CC-) to the 3' terminus of tRNA molecules instead of a complete CCA end as isoform 1 does (in vitro). This chain is CCA tRNA nucleotidyltransferase 1, mitochondrial, found in Homo sapiens (Human).